The sequence spans 192 residues: uncharacterized protein (192 aa).

In terms of domain architecture, Nudix hydrolase spans 29-160; the sequence is RRQAAVLIPL…PLDIQRRGHD (132 aa). Residues 67 to 89 carry the Nudix box motif; the sequence is GAVDSTDASLIAAALREAHEEVA. Residues glutamate 83 and glutamate 87 each contribute to the Mg(2+) site.

Belongs to the Nudix hydrolase family. PCD1 subfamily. Mn(2+) is required as a cofactor. Requires Mg(2+) as cofactor.

In terms of biological role, probably mediates the hydrolysis of some nucleoside diphosphate derivatives. This is an uncharacterized protein from Enterobacter sp. (strain 638).